We begin with the raw amino-acid sequence, 855 residues long: Zinc finger protein 814 (855 aa).

The KRAB domain maps to 15–91 (VTFEDVAVNF…PMAGVSPKKA (77 aa)). Residues 120-142 (HRCEAWGNKLYDSGNFHQHQNEH) form a C2H2-type 1; degenerate zinc finger. C2H2-type zinc fingers lie at residues 242–264 (YVCCECGKSFSKYASLSNHQRVH), 269–291 (HECGECGKSFSKYVSFSNHQRVH), 296–318 (HECGECGKSFSKYVSFSNHQRVH), 324–346 (YECGECGKSFSKYASFSNHQRVH), 352–374 (YECGECGKSFSKYVSFSNHQRVH), 380–402 (YECGECGKSFSKYASFSNHQRVH), 408–430 (YECGECGKSFSQKSSLIQHQRFH), 436–458 (YGCEECGKSFSSEGHLRSHQRVH), 464–486 (FKCGECVKSFSHKRSLVHHQRVH), 492–514 (YQCGECGKSFSQKGNLVLHQRVH), 520–542 (YECGECGKSFSSKGHLRNHQQIH), 548–570 (YECGECGKSFSHKGTLILHQRVH), 576–598 (YGCGECGKSFSSIGHLRSHQRVH), 604–626 (YECGECGKSFSHKRSLVHHQRMH), 632–654 (YKCGDCGKSFNEKGHLRNHQRVH), 660–682 (FKCGECGKCFSHKGNLILHQHGH), 688–710 (YVCRECGKLFKKKSHLLVHQRIH), 716–738 (YACEACQKFFRNKYQLIAHQRVH), 744–766 (YECNDCGKSFTHSSTFCVHKRIH), 772–794 (YECSECGKSFAESSSFTKHKRVH), 800–822 (YECSECGKSFAESSSLTKHKRVH), and 828–850 (YKCEKCGKLFNKKSHLLVHQSSH). A Glycyl lysine isopeptide (Lys-Gly) (interchain with G-Cter in SUMO2) cross-link involves residue Lys335. A Glycyl lysine isopeptide (Lys-Gly) (interchain with G-Cter in SUMO2) cross-link involves residue Lys391.

In Homo sapiens (Human), this protein is Zinc finger protein 814 (ZNF814).